Consider the following 384-residue polypeptide: Guanine nucleotide-binding protein alpha-1 subunit (384 aa).

A lipid anchor (N-myristoyl glycine) is attached at glycine 2. A lipid anchor (S-palmitoyl cysteine) is attached at cysteine 5. In terms of domain architecture, G-alpha spans 38–384; that stretch reads HIRKLLLLGA…RRNLFEAGLL (347 aa). The segment at 41–54 is G1 motif; sequence KLLLLGAGESGKST. Residues glutamate 49, serine 50, glycine 51, lysine 52, serine 53, threonine 54, aspartate 163, leucine 188, threonine 194, glycine 222, asparagine 288, lysine 289, aspartate 291, and alanine 356 each contribute to the GTP site. Serine 53 provides a ligand contact to Mg(2+). The G2 motif stretch occupies residues 186–194; the sequence is DVLLARVRT. A Mg(2+)-binding site is contributed by threonine 194. Residues 215-224 are G3 motif; the sequence is YRLFDVGGQR. The segment at 284 to 291 is G4 motif; that stretch reads MLFLNKFD. The tract at residues 354-359 is G5 motif; the sequence is TTALDQ.

This sequence belongs to the G-alpha family. As to quaternary structure, g proteins are composed of 3 units; alpha, beta and gamma. The alpha chain contains the guanine nucleotide binding site. The cofactor is Mg(2+).

Its function is as follows. Guanine nucleotide-binding proteins (G proteins) are involved as modulators or transducers in various transmembrane signaling systems. In Pisum sativum (Garden pea), this protein is Guanine nucleotide-binding protein alpha-1 subunit (GPA1).